A 166-amino-acid chain; its full sequence is Protein C (166 aa).

The interval 17–42 is disordered; that stretch reads YKRHTDDQASNNQVPKTGQEHGRTSC.

May counteract the cellular interferon antiviral system. The protein is Protein C (P/V/C) of Hendra virus (isolate Horse/Autralia/Hendra/1994).